Reading from the N-terminus, the 432-residue chain is Adenylosuccinate synthetase (432 aa).

Residues 13-19 (GDEGKGK) and 41-43 (GHT) contribute to the GTP site. The active-site Proton acceptor is aspartate 14. Residues aspartate 14 and glycine 41 each coordinate Mg(2+). IMP contacts are provided by residues 14–17 (DEGK), 39–42 (NAGH), threonine 131, arginine 145, glutamine 226, threonine 241, and arginine 305. Histidine 42 functions as the Proton donor in the catalytic mechanism. 301–307 (SVTGRAR) is a substrate binding site. GTP is bound by residues arginine 307, 333-335 (KLD), and 416-418 (STG).

It belongs to the adenylosuccinate synthetase family. Homodimer. The cofactor is Mg(2+).

The protein resides in the cytoplasm. It catalyses the reaction IMP + L-aspartate + GTP = N(6)-(1,2-dicarboxyethyl)-AMP + GDP + phosphate + 2 H(+). Its pathway is purine metabolism; AMP biosynthesis via de novo pathway; AMP from IMP: step 1/2. Functionally, plays an important role in the de novo pathway of purine nucleotide biosynthesis. Catalyzes the first committed step in the biosynthesis of AMP from IMP. This chain is Adenylosuccinate synthetase, found in Neisseria meningitidis serogroup B (strain ATCC BAA-335 / MC58).